The sequence spans 245 residues: UDP-N-acetyl-D-mannosaminuronic acid transferase (245 aa).

It belongs to the glycosyltransferase 26 family.

It catalyses the reaction UDP-N-acetyl-alpha-D-mannosaminouronate + N-acetyl-alpha-D-glucosaminyl-di-trans,octa-cis-undecaprenyl diphosphate = beta-D-ManNAcA-(1-&gt;4)-alpha-D-GlcNAc-di-trans,octa-cis-undecaprenyl diphosphate + UDP + H(+). Its pathway is bacterial outer membrane biogenesis; enterobacterial common antigen biosynthesis. Its function is as follows. Catalyzes the synthesis of Und-PP-GlcNAc-ManNAcA (Lipid II), the second lipid-linked intermediate involved in enterobacterial common antigen (ECA) synthesis. This chain is UDP-N-acetyl-D-mannosaminuronic acid transferase, found in Proteus mirabilis (strain HI4320).